We begin with the raw amino-acid sequence, 221 residues long: MRILLAEDDLLLGDGIRAGLRLEGDTVEWVTDGVAAENALVTDEFDLLVLDIGLPRRSGLDILRNLRHQGLLTPVLLLTARDKVADRVAGLDSGADDYLTKPFDLDELQARVRALTRRTTGRALPQLVHGELRLDPATHQVTLSGQAVELAPREYALLRLLLENSGKVLSRNQLEQSLYGWSGDVESNAIEVHVHHLRRKLGNQLIRTVRGIGYGIDQPAP.

The Response regulatory domain maps to R2–T116. 4-aspartylphosphate is present on D51. The segment at residues L124–Q218 is a DNA-binding region (ompR/PhoB-type).

It is found in the cytoplasm. Its function is as follows. Member of the two-component regulatory system PmrA/PmrB that plays a role in the regulation of resistance towards polymyxin B and cationic antimicrobial peptides in response to limiting concentrations of Mg(2+). Functions as a transcriptional activator by direct binding to a cis-acting sequence upstream of the target gene promoters including lipase lipA and pmrH promoters. Also autoregulates its own pmrAB operon under Mg(2+)-limiting conditions. The sequence is that of Response regulator protein PmrA (pmrA) from Pseudomonas aeruginosa (strain ATCC 15692 / DSM 22644 / CIP 104116 / JCM 14847 / LMG 12228 / 1C / PRS 101 / PAO1).